The following is a 524-amino-acid chain: GMP synthase [glutamine-hydrolyzing] (524 aa).

In terms of domain architecture, Glutamine amidotransferase type-1 spans 5 to 195; that stretch reads KVIVIDFGGQ…VRGVCGCAGT (191 aa). Cys-82 functions as the Nucleophile in the catalytic mechanism. Catalysis depends on residues His-169 and Glu-171. The region spanning 196–389 is the GMPS ATP-PPase domain; that stretch reads WKMDAFVENT…LGIPEHLVFR (194 aa). 223-229 contacts ATP; sequence SGGVDSS.

Homodimer.

The enzyme catalyses XMP + L-glutamine + ATP + H2O = GMP + L-glutamate + AMP + diphosphate + 2 H(+). It participates in purine metabolism; GMP biosynthesis; GMP from XMP (L-Gln route): step 1/1. Functionally, catalyzes the synthesis of GMP from XMP. This chain is GMP synthase [glutamine-hydrolyzing], found in Lachnospira eligens (strain ATCC 27750 / DSM 3376 / VPI C15-48 / C15-B4) (Eubacterium eligens).